A 345-amino-acid chain; its full sequence is Protein-glutamate methylesterase/protein-glutamine glutaminase 2 (345 aa).

Positions 7-124 (KVLVVDDSPV…TADMLGYRSL (118 aa)) constitute a Response regulatory domain. The residue at position 58 (aspartate 58) is a 4-aspartylphosphate. In terms of domain architecture, CheB-type methylesterase spans 154–345 (STSQYQLIAI…LPQFLCDLLS (192 aa)). Catalysis depends on residues serine 166, histidine 192, and aspartate 289.

This sequence belongs to the CheB family. Phosphorylated by CheA. Phosphorylation of the N-terminal regulatory domain activates the methylesterase activity.

It is found in the cytoplasm. It catalyses the reaction [protein]-L-glutamate 5-O-methyl ester + H2O = L-glutamyl-[protein] + methanol + H(+). It carries out the reaction L-glutaminyl-[protein] + H2O = L-glutamyl-[protein] + NH4(+). Functionally, involved in chemotaxis. Part of a chemotaxis signal transduction system that modulates chemotaxis in response to various stimuli. Catalyzes the demethylation of specific methylglutamate residues introduced into the chemoreceptors (methyl-accepting chemotaxis proteins or MCP) by CheR. Also mediates the irreversible deamidation of specific glutamine residues to glutamic acid. The sequence is that of Protein-glutamate methylesterase/protein-glutamine glutaminase 2 from Vibrio vulnificus (strain YJ016).